The chain runs to 379 residues: Carbamoyl phosphate synthase small chain (379 aa).

The interval 1-189 (MSKSALLVLE…GLPEAKADSE (189 aa)) is CPSase. L-glutamine contacts are provided by Ser-47, Gly-241, and Gly-243. A Glutamine amidotransferase type-1 domain is found at 193–379 (HVVAYDFGAK…FIELIKQFRA (187 aa)). Residue Cys-269 is the Nucleophile of the active site. The L-glutamine site is built by Leu-270, Gln-273, Asn-311, Gly-313, and Phe-314. Residues His-353 and Glu-355 contribute to the active site.

Belongs to the CarA family. As to quaternary structure, composed of two chains; the small (or glutamine) chain promotes the hydrolysis of glutamine to ammonia, which is used by the large (or ammonia) chain to synthesize carbamoyl phosphate. Tetramer of heterodimers (alpha,beta)4.

It catalyses the reaction hydrogencarbonate + L-glutamine + 2 ATP + H2O = carbamoyl phosphate + L-glutamate + 2 ADP + phosphate + 2 H(+). It carries out the reaction L-glutamine + H2O = L-glutamate + NH4(+). Its pathway is amino-acid biosynthesis; L-arginine biosynthesis; carbamoyl phosphate from bicarbonate: step 1/1. It functions in the pathway pyrimidine metabolism; UMP biosynthesis via de novo pathway; (S)-dihydroorotate from bicarbonate: step 1/3. Functionally, small subunit of the glutamine-dependent carbamoyl phosphate synthetase (CPSase). CPSase catalyzes the formation of carbamoyl phosphate from the ammonia moiety of glutamine, carbonate, and phosphate donated by ATP, constituting the first step of 2 biosynthetic pathways, one leading to arginine and/or urea and the other to pyrimidine nucleotides. The small subunit (glutamine amidotransferase) binds and cleaves glutamine to supply the large subunit with the substrate ammonia. This Vibrio cholerae serotype O1 (strain ATCC 39315 / El Tor Inaba N16961) protein is Carbamoyl phosphate synthase small chain.